The chain runs to 1894 residues: Plexin-A2 (1894 aa).

Residues 1–34 (MEQRRFYLRAMQADNLSVVLLSVAWLLLARGTTG) form the signal peptide. N-linked (GlcNAc...) asparagine glycosylation is found at Asn-15 and Asn-76. A Sema domain is found at 35–508 (MPQYSTFHSE…SERQVTRVPV (474 aa)). Topologically, residues 35-1237 (MPQYSTFHSE…VISDSLLTLP (1203 aa)) are extracellular. Disulfide bonds link Cys-94-Cys-103 and Cys-129-Cys-137. Asn-163 and Asn-327 each carry an N-linked (GlcNAc...) asparagine glycan. 8 disulfides stabilise this stretch: Cys-284–Cys-405, Cys-300–Cys-356, Cys-374–Cys-393, Cys-511–Cys-528, Cys-517–Cys-559, Cys-520–Cys-537, Cys-531–Cys-543, and Cys-594–Cys-613. Asn-598, Asn-696, and Asn-756 each carry an N-linked (GlcNAc...) asparagine glycan. 4 consecutive IPT/TIG domains span residues 858 to 951 (PQIT…QYTF), 954 to 1037 (PSVL…QFEY), 1041 to 1139 (PRVQ…KFIY), and 1143 to 1228 (PTFE…SVSV). N-linked (GlcNAc...) asparagine glycosylation is found at Asn-1180 and Asn-1205. A helical transmembrane segment spans residues 1238-1258 (AIISIAAGGSLLLIIVIIVLI). Residues 1259–1894 (AYKRKSREND…HLINAMSIES (636 aa)) lie on the Cytoplasmic side of the membrane. A coiled-coil region spans residues 1261 to 1310 (KRKSRENDLTLKRLQMQMDNLESRVALECKEAFAELQTDINELTSDLDRS). At Ser-1612 the chain carries Phosphoserine.

It belongs to the plexin family. Homodimer. Interacts with RND1. Interacts directly with NRP1 and NRP2. The PLXNA2 homodimer interacts with a SEMA6A homodimer, giving rise to a heterotetramer.

The protein localises to the cell membrane. In terms of biological role, coreceptor for SEMA3A and SEMA6A. Necessary for signaling by SEMA6A and class 3 semaphorins and subsequent remodeling of the cytoskeleton. Plays a role in axon guidance, invasive growth and cell migration. Class 3 semaphorins bind to a complex composed of a neuropilin and a plexin. The plexin modulates the affinity of the complex for specific semaphorins, and its cytoplasmic domain is required for the activation of down-stream signaling events in the cytoplasm. This is Plexin-A2 (Plxna2) from Mus musculus (Mouse).